A 969-amino-acid chain; its full sequence is Aspartic protease 5 (969 aa).

A signal peptide spans 1-22 (MEAGAMGGSSFLSFSSGPSAET). The span at 1–45 (MEAGAMGGSSFLSFSSGPSAETSPSSLSPPTSSSPSPSPQLVSDS) shows a compositional bias: low complexity. 5 disordered regions span residues 1–65 (MEAG…SSRT), 79–104 (ENEAAPTISQEERRGGSMTAASAGHL), 128–149 (SSATSVLSLGGERGRPPSRSSS), 173–193 (SSSSPLSPLPHPRGAPASACG), and 311–382 (FLSL…DLPR). Topologically, residues 23–820 (SPSSLSPPTS…PEGLPLSPQQ (798 aa)) are lumenal. The span at 311–324 (FLSLSSSPRSLASD) shows a compositional bias: low complexity. Residues 335–355 (QSREQRGEREGERQRPDKGEE) are compositionally biased toward basic and acidic residues. A Peptidase A1 domain is found at 413-758 (YFLDILVGTP…DREQDRVGFA (346 aa)). Residue Asp-431 is part of the active site. The segment at 608–635 (PPESESTPATEALRPVAGESASRRISEK) is disordered. Asp-682 is an active-site residue. Residues 768-794 (DQRPRGPDSGDGPKGRPTAPFTVPPLR) form a disordered region. Over residues 769–781 (QRPRGPDSGDGPK) the composition is skewed to basic and acidic residues. The helical transmembrane segment at 821 to 841 (LWVAAALVVVAILIAVTVILL) threads the bilayer. Residues 842–969 (HTIKRPSRSS…TLLDLPLGGE (128 aa)) lie on the Cytoplasmic side of the membrane. The disordered stretch occupies residues 922 to 969 (EDDGDFFGDDSVPSAEEQETAPSLSLREESSPFSASQSTLLDLPLGGE). The segment covering 952–961 (SPFSASQSTL) has biased composition (polar residues).

Belongs to the peptidase A1 family. In terms of processing, may be auto-cleaved to produce a 55 kDa form.

The protein resides in the golgi apparatus membrane. In tachyzoites, plays an essential role in the export of several dense granule proteins into the host cell by cleaving the localization motif RRLxx (termed Toxoplasma export element (TEXEL)) located downstream of the N-terminal secretory signal sequence. However, can also regulate the export of proteins that lack the TEXEL motif, such as GRA24. Requires Arg at P3 and P2, and Leu at P1 in the substrate TEXEL motif and, specifically, cleaves after Leu. Cleaves GRA16; proteolytic cleavage is essential for the correct trafficking of GRA16 from the parasite into the infected host nucleus. Cleaves GRA19 and GRA20. Cleaves MYR1. Cleaves LCAT, GRA44, GRA46, GRA46, ROP35/WNG1 and ROP34/WNG2. By regulating the export of dense granule proteins into the host cell, regulates multiple processes during tachyzoite infection of host cells, including recruitment of host mitochondria to the parasitophorous vacuole (PV), formation of the nanotubular network (NTN) or intravacuolar network (IVN) which are membranous tubules that bud from the PV membrane into the vacuolar lumen and, up-regulation of host cell genes to facilitate the parasite infection and modulate the host innate immune response. At the bradyzoite stage, also involved in the formation of the cyst wall. This chain is Aspartic protease 5, found in Toxoplasma gondii.